Reading from the N-terminus, the 515-residue chain is Adenine DNA glycosylase (515 aa).

Over residues 1–24 the composition is skewed to basic residues; it reads MKKLQASVRSHKKQPANHKRRRTR. Residues 1 to 38 are disordered; it reads MKKLQASVRSHKKQPANHKRRRTRALSSSQAKPSSLDG. Glu-105 (proton donor/acceptor) is an active-site residue. 4 residues coordinate [4Fe-4S] cluster: Cys-261, Cys-268, Cys-271, and Cys-277. Residues 335–466 enclose the Nudix hydrolase domain; sequence PREEYSATCV…AMKKVFRMYE (132 aa). The Nudix box motif lies at 376–398; it reads VTLEPSEQHQHKALLQELQRWCG. The interval 468–494 is disordered; the sequence is HRQGTRKGSKRSQVCPPSSRKKPSLGQ.

It belongs to the Nth/MutY family. [4Fe-4S] cluster is required as a cofactor. Expressed in heart, lung, liver, intestine, brain and thymus.

It localises to the nucleus. The protein resides in the mitochondrion. It carries out the reaction Hydrolyzes free adenine bases from 7,8-dihydro-8-oxoguanine:adenine mismatched double-stranded DNA, leaving an apurinic site.. In terms of biological role, involved in oxidative DNA damage repair. Initiates repair of A*oxoG to C*G by removing the inappropriately paired adenine base from the DNA backbone. Possesses both adenine and 2-OH-A DNA glycosylase activities. The chain is Adenine DNA glycosylase (Mutyh) from Mus musculus (Mouse).